The chain runs to 507 residues: MEQFKIDLNLGRSQQHDFIYPLIFQEYIYALAHDRGLNRSIFLENAGYDNKFSLLIVKRLITHLITQMYQQNHFLFSVNDSNQKKILGYNTNLYSQMIFEGFAVVVEIPFYLRLLSFLEGKERMKSHNLRSIHSIFPFLEDKFAFLNYVLDIQIPHPIHLEILIQTLRYWVKDASSLHLLRFFLHEYPIWNSFLIRKKSSFSFSKRNQRFFFFLYNFHVCEYESIFVFLRNQSSHLRSISYETFLERISFYRKIELEEVFTKDFKAILWVFKEPFLHYVRYRGNALLASKGTSLLMNKWKHYIVNFWQCYFYIWSQPRRIDINQLSNHSLDFLGYLSSVRLKHLMVRSQMIENSFLIENASKKFDTLMPITPMIGSLSKAKFCNVLGHPMSKPAWSALSDSDIIERFGCIYRNLSHYYSGSLKKRNLYRIKYILRLSCARTLARKHKSTVRLFLKRLGMGLLEEFFTGEEQVFYLTLPKASSTSGELYRRRVWYLDIICINHISNYE.

Belongs to the intron maturase 2 family. MatK subfamily.

The protein resides in the plastid. It is found in the chloroplast. Usually encoded in the trnK tRNA gene intron. Probably assists in splicing its own and other chloroplast group II introns. The chain is Maturase K from Kalmia buxifolia (Sand myrtle).